The sequence spans 514 residues: Probable drug/proton antiporter YHK8 (514 aa).

Topologically, residues 1-74 (MVAEFQIASA…RHMSTARRYY (74 aa)) are cytoplasmic. The chain crosses the membrane as a helical span at residues 75 to 95 (ISSLITFTSMVITMISSSWTL). Residues 96–111 (PSTHIIEHFHISHEVS) are Extracellular-facing. Residues 112–132 (TLGITLYVFGLGIGPLFLSPL) form a helical membrane-spanning segment. Over 133–141 (SELYGRRIT) the chain is Cytoplasmic. Residues 142 to 162 (FLYALTLSIIWQCLTIWSKTI) traverse the membrane as a helical segment. Residues 163-170 (TGVMFGRF) are Extracellular-facing. The chain crosses the membrane as a helical span at residues 171–191 (LSGFFGSAFLSVAGGAIADIF). The Cytoplasmic portion of the chain corresponds to 192–200 (DKDQIGIPM). A helical membrane pass occupies residues 201-221 (AIYTTSAFLGPSLGPIIGGAL). Topologically, residues 222-227 (YHQSYK) are extracellular. Residues 228-248 (WTFITLLITSGCCLVMIIFTI) form a helical membrane-spanning segment. The Cytoplasmic portion of the chain corresponds to 249-307 (PETYKPMLLIRKAKRLRKEKNDQRYYAVLEVTREQTSLLSAIFLSTKRPFGLLLRDRMM). A helical membrane pass occupies residues 308–328 (GVLCFYTGLELAIIYLYFVAF). Residues 329–342 (PYVFKKLYNFGPME) are Extracellular-facing. Residues 343–363 (IACSYIGIMVGMILSAPTCLL) traverse the membrane as a helical segment. The Cytoplasmic segment spans residues 364–386 (FQKTFEWRVKRNNGVKTPEMRFE). Residues 387-407 (PLFYGAFLTPVGLFIFAFTCY) traverse the membrane as a helical segment. Over 408–412 (KHVHW) the chain is Extracellular. Residues 413-433 (IAPIIGSAIFGSGVYFVFTGV) traverse the membrane as a helical segment. Residues 434-447 (FAYTVDAYRRYAAS) are Cytoplasmic-facing. A helical transmembrane segment spans residues 448 to 468 (GMACNTFVRCIMAGVFPLFGL). Residues 469 to 477 (QMYKSMGVN) are Extracellular-facing. Residues 478–498 (WAGFLLAMVTVAMIPVPFLFT) traverse the membrane as a helical segment. Over 499–514 (KYGARLRAKSPYAWDD) the chain is Cytoplasmic.

It belongs to the major facilitator superfamily. CAR1 family.

The protein localises to the membrane. In terms of biological role, probable drug/proton antiporter. The sequence is that of Probable drug/proton antiporter YHK8 (YHK8) from Saccharomyces cerevisiae (strain ATCC 204508 / S288c) (Baker's yeast).